Consider the following 373-residue polypeptide: Probable tRNA sulfurtransferase (373 aa).

Residues 54 to 158 (NKNIEELSKV…NDVAYFYYKI (105 aa)) form the THUMP domain. Residues 176 to 177 (LF), 201 to 202 (NF), Lys-256, Gly-278, and Gln-287 contribute to the ATP site.

This sequence belongs to the ThiI family.

It is found in the cytoplasm. The enzyme catalyses [ThiI sulfur-carrier protein]-S-sulfanyl-L-cysteine + a uridine in tRNA + 2 reduced [2Fe-2S]-[ferredoxin] + ATP + H(+) = [ThiI sulfur-carrier protein]-L-cysteine + a 4-thiouridine in tRNA + 2 oxidized [2Fe-2S]-[ferredoxin] + AMP + diphosphate. It catalyses the reaction [ThiS sulfur-carrier protein]-C-terminal Gly-Gly-AMP + S-sulfanyl-L-cysteinyl-[cysteine desulfurase] + AH2 = [ThiS sulfur-carrier protein]-C-terminal-Gly-aminoethanethioate + L-cysteinyl-[cysteine desulfurase] + A + AMP + 2 H(+). It participates in cofactor biosynthesis; thiamine diphosphate biosynthesis. Catalyzes the ATP-dependent transfer of a sulfur to tRNA to produce 4-thiouridine in position 8 of tRNAs, which functions as a near-UV photosensor. Also catalyzes the transfer of sulfur to the sulfur carrier protein ThiS, forming ThiS-thiocarboxylate. This is a step in the synthesis of thiazole, in the thiamine biosynthesis pathway. The sulfur is donated as persulfide by IscS. The protein is Probable tRNA sulfurtransferase of Saccharolobus islandicus (strain L.S.2.15 / Lassen #1) (Sulfolobus islandicus).